The primary structure comprises 155 residues: 17.4 kDa class III heat shock protein (155 aa).

Positions 35 to 155 (GRGSSNNIPI…KPKTVQIAVS (121 aa)) constitute a sHSP domain.

It belongs to the small heat shock protein (HSP20) family. As to quaternary structure, may form oligomeric structures.

It is found in the cytoplasm. The protein is 17.4 kDa class III heat shock protein (HSP17.4B) of Arabidopsis thaliana (Mouse-ear cress).